A 334-amino-acid chain; its full sequence is tRNA uridine(34) hydroxylase (334 aa).

The region spanning 123–217 (SDPDVILVDT…YLEEVKAEES (95 aa)) is the Rhodanese domain. Residue C177 is the Cysteine persulfide intermediate of the active site.

It belongs to the TrhO family.

The catalysed reaction is uridine(34) in tRNA + AH2 + O2 = 5-hydroxyuridine(34) in tRNA + A + H2O. In terms of biological role, catalyzes oxygen-dependent 5-hydroxyuridine (ho5U) modification at position 34 in tRNAs. The protein is tRNA uridine(34) hydroxylase of Shewanella baltica (strain OS195).